Here is a 219-residue protein sequence, read N- to C-terminus: Cell division protein B2 (219 aa).

Part of a cell division machinery. The chain is Cell division protein B2 from Sulfolobus acidocaldarius (strain ATCC 33909 / DSM 639 / JCM 8929 / NBRC 15157 / NCIMB 11770).